Here is a 677-residue protein sequence, read N- to C-terminus: Protein asunder (677 aa).

Residues 515 to 540 (RLKLSKAKDQYRLLYRELEQLIQLNS) adopt a coiled-coil conformation. Positions 578 to 598 (ESPLSPERLEPTSSSSSNSLL) are enriched in low complexity. The tract at residues 578–604 (ESPLSPERLEPTSSSSSNSLLKARKRR) is disordered. The Nuclear localization signal (NLS) motif lies at 598-604 (LKARKRR).

The protein belongs to the Integrator subunit 13 family. Belongs to the multiprotein complex Integrator, at least composed of IntS1, IntS2, IntS3, IntS4, omd/IntS5, IntS6, defl/IntS7, IntS8, IntS9, IntS10, IntS11, IntS12, asun/IntS13, IntS14 and IntS15. The core complex associates with protein phosphatase 2A subunits mts/PP2A and Pp2A-29B, to form the Integrator-PP2A (INTAC) complex. In terms of processing, phosphorylated.

Its subcellular location is the nucleus. It is found in the cytoplasm. It localises to the perinuclear region. In terms of biological role, component of the integrator complex, a multiprotein complex that terminates RNA polymerase II (Pol II) transcription in the promoter-proximal region of genes. The integrator complex provides a quality checkpoint during transcription elongation by driving premature transcription termination of transcripts that are unfavorably configured for transcriptional elongation: the complex terminates transcription by (1) catalyzing dephosphorylation of the C-terminal domain (CTD) of Pol II subunit Polr2A/Rbp1 and Spt5, and (2) degrading the exiting nascent RNA transcript via endonuclease activity. The integrator complex is also involved in the 3'-end processing of the U7 snRNA, and also the spliceosomal snRNAs U1, U2, U4 and U5. The chain is Protein asunder (asun) from Drosophila willistoni (Fruit fly).